A 207-amino-acid chain; its full sequence is Ion-translocating oxidoreductase complex subunit B (207 aa).

The hydrophobic stretch occupies residues 1–29 (MLDLSIIAYLLIAICLIALIFGALLGYFS). In terms of domain architecture, 4Fe-4S spans 35 to 93 (EADPIVDQIDAILPQSQCGQCGYPGCKPYAEAIANGDQITKCVPGGQPLVVKIAELMGV). [4Fe-4S] cluster contacts are provided by C52, C55, C60, C76, C116, C119, C122, C126, C146, C149, C152, and C156. 4Fe-4S ferredoxin-type domains are found at residues 107-136 (KVALIHEDMCIGCTKCIQACPVDAIIGTNK) and 137-166 (AMHTVVADLCTGCELCVAPCPTNCIEMIKV).

This sequence belongs to the 4Fe4S bacterial-type ferredoxin family. RnfB subfamily. In terms of assembly, the complex is composed of six subunits: RnfA, RnfB, RnfC, RnfD, RnfE and RnfG. Requires [4Fe-4S] cluster as cofactor.

The protein localises to the cell inner membrane. Functionally, part of a membrane-bound complex that couples electron transfer with translocation of ions across the membrane. The chain is Ion-translocating oxidoreductase complex subunit B from Haemophilus ducreyi (strain 35000HP / ATCC 700724).